Here is a 107-residue protein sequence, read N- to C-terminus: Integration host factor (107 aa).

The disordered stretch occupies residues 1–20 (MALPPLTPEQRAAALEKAAA). A compositionally biased stretch (low complexity) spans 9-18 (EQRAAALEKA). Lys54 is a binding site for DNA. Residues 64 to 71 (LPGVGKVR) carry the H2TH motif, binds DNA motif. Positions 82, 85, 88, 92, 93, and 94 each coordinate DNA. A lid, binds DNA region spans residues 82 to 94 (SESRRVRGLGSNQ).

It belongs to the actinobacterial IHF (aIHF) family. As to quaternary structure, monomer.

It is found in the cytoplasm. The protein resides in the spore. The protein localises to the nucleoid. In terms of biological role, a nucleoid-associated protein (NAP) that probably plays a role in chromosome compactation. Contributes to development and secondary metabolism, but is dispensable for growth and viability. Binds to the promoter region of a number of genes (including itself); multiple molecules of the protein bind to the DNA simultaneously, deletion alters the expression of about 30 genes (both up- and down-regulation occurs). Plays a role in controlling viability. Binds dsDNA without any obvious sequence specificity, in a concentration and length-dependent manner. Promotes supercoiling in a topoisomerase-dependent manner (counteracts TopA plasmid relaxation). Binds DNA as a monomer, contacting 8 base pairs via the phosphate backbone; each monomer can bind 2 DNA duplexes, allowing a bridging function. Alters DNA topology, constraining negative supercoils, possibly by DNA twist. Longer dsDNA binds more than one sIHF subunit. The sequence is that of Integration host factor from Streptomyces coelicolor (strain ATCC BAA-471 / A3(2) / M145).